The sequence spans 204 residues: uncharacterized protein (204 aa).

A helical transmembrane segment spans residues 63 to 83 (SLLLSMVASVTAAGGNAAIVG).

The protein localises to the membrane. This is an uncharacterized protein from Mycobacterium tuberculosis (strain ATCC 25618 / H37Rv).